Reading from the N-terminus, the 1910-residue chain is A disintegrin and metalloproteinase with thrombospondin motifs 20 (1910 aa).

Positions 1–21 (MWVAKWLTGLLYHLSLFITRS) are cleaved as a signal peptide. Residues 22-253 (WEVDFHPRQE…DERRHSRKKR (232 aa)) constitute a propeptide that is removed on maturation. Residues Asn-92 and Asn-191 are each glycosylated (N-linked (GlcNAc...) asparagine). Positions 259–467 (RYIEIMVTAD…GYGECLLDKP (209 aa)) constitute a Peptidase M12B domain. Cystine bridges form between Cys-334-Cys-387, Cys-363-Cys-369, Cys-381-Cys-462, Cys-419-Cys-446, Cys-489-Cys-511, Cys-500-Cys-521, Cys-506-Cys-540, Cys-534-Cys-545, Cys-568-Cys-605, Cys-572-Cys-610, and Cys-583-Cys-595. Zn(2+) is bound at residue His-403. The active site involves Glu-404. Residues His-407 and His-413 each contribute to the Zn(2+) site. Asn-445 carries an N-linked (GlcNAc...) asparagine glycan. Residues 468 to 555 (DEEIYNLPSE…VNKETETRPV (88 aa)) form the Disintegrin domain. The region spanning 556–611 (NGEWGPWEPYSSCSRTCGGGIESATRRCNRPEPRNGGNYCVGRRMKFRSCNTDSCP) is the TSP type-1 1 domain. 5 N-linked (GlcNAc...) asparagine glycosylation sites follow: Asn-702, Asn-717, Asn-728, Asn-809, and Asn-870. A spacer region spans residues 724-846 (TGVFNSSHYG…FNIPLEERSD (123 aa)). 14 consecutive TSP type-1 domains span residues 846–904 (DMFT…NTDC), 905–961 (ELRW…QELC), 966–1023 (VFTR…FSCP), 1024–1073 (SWAA…SPCE), 1076–1135 (TCAS…TPCS), 1152–1206 (KMAQ…DCFT), 1207–1264 (PCGE…AACP), 1304–1356 (RGNQ…QCGP), 1358–1416 (PCPQ…HACP), 1417–1475 (ADVS…VRCP), 1476–1531 (SWKA…QDCV), 1535–1588 (GMER…NPPC), 1589–1652 (NYIV…INSC), and 1654–1710 (HLAT…NDCK). N-linked (GlcNAc...) asparagine glycosylation occurs at Asn-1061. Asn-1456 is a glycosylation site (N-linked (GlcNAc...) asparagine). N-linked (GlcNAc...) asparagine glycosylation is found at Asn-1542 and Asn-1572. Residues 1711–1910 (SFTTCKEIQV…MTTGLPIQVI (200 aa)) form the GON domain. N-linked (GlcNAc...) asparagine glycosylation is found at Asn-1763, Asn-1781, and Asn-1852.

The cofactor is Zn(2+). In terms of processing, the precursor is cleaved by a furin endopeptidase. Post-translationally, glycosylated. Can be O-fucosylated by POFUT2 on a serine or a threonine residue found within the consensus sequence C1-X(2)-(S/T)-C2-G of the TSP type-1 repeat domains where C1 and C2 are the first and second cysteine residue of the repeat, respectively. Fucosylated repeats can then be further glycosylated by the addition of a beta-1,3-glucose residue by the glucosyltransferase, B3GALTL. Fucosylation mediates the efficient secretion of ADAMTS family members. Can also be C-glycosylated with one or two mannose molecules on tryptophan residues within the consensus sequence W-X-X-W of the TPRs, and N-glycosylated. These other glycosylations can also facilitate secretion. Very sparingly expressed, although is detected at low levels in testis, prostate, ovary, heart, placenta, lung and pancreas. Overexpressed in several brain, colon and breast carcinomas.

Its subcellular location is the secreted. The protein localises to the extracellular space. The protein resides in the extracellular matrix. Its function is as follows. May play a role in tissue-remodeling process occurring in both normal and pathological conditions. May have a protease-independent function in the transport from the endoplasmic reticulum to the Golgi apparatus of secretory cargos, mediated by the GON domain. In Homo sapiens (Human), this protein is A disintegrin and metalloproteinase with thrombospondin motifs 20 (ADAMTS20).